The sequence spans 804 residues: Probable replication endonuclease from prophage-like region 2 (804 aa).

Residues Tyr503 and Tyr507 each act as O-(5'-phospho-DNA)-tyrosine intermediate in the active site.

This sequence belongs to the phage GPA family.

Its function is as follows. Possible endonuclease which induces a single-strand cut and initiates DNA replication. This Salmonella typhi protein is Probable replication endonuclease from prophage-like region 2.